Consider the following 393-residue polypeptide: Pigment production hydroxylase (393 aa).

Its function is as follows. Involved in pigment production acting as a hydroxylase that transforms indole to indoxyl, resulting in the formation of indigo. The polypeptide is Pigment production hydroxylase (Rhodococcus erythropolis (Arthrobacter picolinophilus)).